Reading from the N-terminus, the 690-residue chain is Ligand of Numb protein X 2 (690 aa).

The RING-type zinc-finger motif lies at 50-88; it reads CHICLQPLLQPLDTPCGHTFCYKCLRNFLQEKDFCPLDR. The tract at residues 198–224 is disordered; that stretch reads STWSEEPGLDNPAFEESAGADTTQQPL. The short motif at 208–211 is the NPXY motif element; it reads NPAF. PDZ domains follow at residues 233 to 318, 339 to 422, 468 to 554, and 600 to 688; these read TIEI…LRER, QVAL…ARPG, HITV…KALE, and DIVL…WPGS. The segment at 418 to 455 is disordered; sequence IARPGKPQPGNTIREAGNHSSSSQHHTPPPYYSRPSSH.

In terms of assembly, interacts with the phosphotyrosine interaction domain of NUMB.

The protein is Ligand of Numb protein X 2 (LNX2) of Homo sapiens (Human).